The following is a 495-amino-acid chain: BUB3-interacting and GLEBS motif-containing protein ZNF207 (495 aa).

Residues 1 to 92 form a microtubule-binding region region; the sequence is MGRKKKKQLK…EGIPEKDMDE (92 aa). C2H2-type zinc fingers lie at residues 11–34 and 35–58; these read PWCW…KAKH and FKCH…MQVH. Residues 99-111 show a composition bias toward basic and acidic residues; that stretch reads QKTQESQKKKQQD. 3 disordered regions span residues 99 to 161, 252 to 292, and 316 to 372; these read QKTQ…PGIP, PPAP…SNSE, and VGTD…ATLT. Residues 112 to 121 are compositionally biased toward acidic residues; that stretch reads DSDEYDDDES. Positions 127–136 are enriched in polar residues; it reads FQPQPVQPQQ. The segment covering 142-161 has biased composition (pro residues); sequence MAQPGLPPVPGAPGMPPGIP. Low complexity-rich tracts occupy residues 283–292 and 326–372; these read SSSTASSNSE and TPAA…ATLT. Residues 376-408 form a GLEBS region; that stretch reads ATSKLIHPDEDISLEERRAQLPKYQRNLPRPGQ. Residues 462–495 form a disordered region; the sequence is PYGQGPPMVPPYQGGPPRPPMGMRPPVMSQGGRY. Residues 464–484 are compositionally biased toward pro residues; the sequence is GQGPPMVPPYQGGPPRPPMGM.

In terms of assembly, interacts (via GLEBS region) with BUB3. In day-13 embryo, strongly expressed in the nervous system (brain, spinal cord and dorsal root ganglia), with strong to weak expression in other regions. Continues to be strongly expressed in the neonatal brain while expression is weak in the brain and spinal cord of adult.

It localises to the nucleus. It is found in the chromosome. Its subcellular location is the centromere. The protein localises to the kinetochore. The protein resides in the cytoplasm. It localises to the cytoskeleton. It is found in the spindle. Kinetochore- and microtubule-binding protein that plays a key role in spindle assembly. ZNF207/BuGZ is mainly composed of disordered low-complexity regions and undergoes phase transition or coacervation to form temperature-dependent liquid droplets. Coacervation promotes microtubule bundling and concentrates tubulin, promoting microtubule polymerization and assembly of spindle and spindle matrix by concentrating its building blocks. Also acts as a regulator of mitotic chromosome alignment by mediating the stability and kinetochore loading of BUB3. Mechanisms by which BUB3 is protected are unclear: according to a first report, ZNF207/BuGZ may act by blocking ubiquitination and proteasomal degradation of BUB3. According to another report, the stabilization is independent of the proteasome. The protein is BUB3-interacting and GLEBS motif-containing protein ZNF207 of Mus musculus (Mouse).